A 237-amino-acid polypeptide reads, in one-letter code: Ribosomal RNA small subunit methyltransferase G (237 aa).

Residues G78, F83, 129–130 (AE), and R148 contribute to the S-adenosyl-L-methionine site.

It belongs to the methyltransferase superfamily. RNA methyltransferase RsmG family.

The protein localises to the cytoplasm. Functionally, specifically methylates the N7 position of a guanine in 16S rRNA. This Streptococcus pyogenes serotype M4 (strain MGAS10750) protein is Ribosomal RNA small subunit methyltransferase G.